Here is a 145-residue protein sequence, read N- to C-terminus: Cell wall teichoic acid glycosylation protein GtcA (145 aa).

A run of 4 helical transmembrane segments spans residues 21–41 (ILMYLIMGGFTTLINIVTFWL), 52–69 (IANTIAWVASVLFAYFSN), 96–116 (FLTYLVDILVMILLIEVLSIN), and 121–141 (KIWTNVIVLVLNYVFSKWIIF).

The protein belongs to the GtrA family.

It is found in the cell membrane. Functionally, involved in the decoration of cell wall teichoic acid with galactose and glucose. The chain is Cell wall teichoic acid glycosylation protein GtcA (gtcA) from Listeria monocytogenes serovar 1/2a (strain ATCC BAA-679 / EGD-e).